The primary structure comprises 207 residues: MIVKFCGFKTESDIKKIKKLEVDAVGFIHYPDSKRHVSLKQLKYLAKIVPDHIEKVVVVVNPQMSTIKRIINQTDINTIQLHGNESIQLIRNIKKLNSKIRIIKAIPATRNLNNNIQKYKDEIDMFIIDTPSITYGGTGQSFDWKLLKKIKGVDFLIAGGLDFEKIKRLEIYSFGQCGYDISTGIESHNEKDFNKMTRILKFLKGDE.

The protein belongs to the TrpF family.

The catalysed reaction is N-(5-phospho-beta-D-ribosyl)anthranilate = 1-(2-carboxyphenylamino)-1-deoxy-D-ribulose 5-phosphate. The protein operates within amino-acid biosynthesis; L-tryptophan biosynthesis; L-tryptophan from chorismate: step 3/5. This Staphylococcus epidermidis (strain ATCC 35984 / DSM 28319 / BCRC 17069 / CCUG 31568 / BM 3577 / RP62A) protein is N-(5'-phosphoribosyl)anthranilate isomerase.